A 505-amino-acid polypeptide reads, in one-letter code: Activin receptor type-1B (505 aa).

The N-terminal stretch at 1 to 23 (MAESAGASSFFPLVVLLLAGSGG) is a signal peptide. Residues 24-126 (SGPRGIQALL…EHPSMWGPVE (103 aa)) are Extracellular-facing. Asparagine 43 carries an N-linked (GlcNAc...) asparagine glycan. The chain crosses the membrane as a helical span at residues 127 to 149 (LVGIIAGPVFLLFLIIIIVFLVI). Over 150 to 505 (NYHQRVYHNR…QLSVQEDVKI (356 aa)) the chain is Cytoplasmic. One can recognise a GS domain in the interval 177–206 (KTLQDLVYDLSTSGSGSGLPLFVQRTVART). One can recognise a Protein kinase domain in the interval 207 to 497 (IVLQEIIGKG…LRIKKTLSQL (291 aa)). Residues 213–221 (IGKGRFGEV) and lysine 234 contribute to the ATP site. Aspartate 335 serves as the catalytic Proton acceptor. Phosphotyrosine is present on tyrosine 380.

Belongs to the protein kinase superfamily. TKL Ser/Thr protein kinase family. TGFB receptor subfamily. Forms an activin receptor complex with activin receptor type-2 (ACVR2A or ACVR2B). Part of a complex consisting of MAGI2/ARIP1, ACVR2A, ACVR1B and SMAD3. Interacts with SMAD2 and SMAD3. Interacts with SMAD7. Interacts with FKBP1A. Interacts with IGSF1. Interacts with CRIPTO. Interacts with TDP2. Interacts with TSC22D1/TSC-22. Mg(2+) is required as a cofactor. The cofactor is Mn(2+). Post-translationally, autophosphorylated. Phosphorylated by activin receptor type-2 (ACVR2A or ACVR2B) in response to activin-binding at serine and threonine residues in the GS domain. Phosphorylation of ACVR1B by activin receptor type-2 regulates association with SMAD7. In terms of processing, ubiquitinated. Level of ubiquitination is regulated by the SMAD7-SMURF1 complex. Ubiquitinated. In terms of tissue distribution, urogenital ridge, testis, ovary, brain and lungs.

It is found in the cell membrane. It catalyses the reaction L-threonyl-[receptor-protein] + ATP = O-phospho-L-threonyl-[receptor-protein] + ADP + H(+). The catalysed reaction is L-seryl-[receptor-protein] + ATP = O-phospho-L-seryl-[receptor-protein] + ADP + H(+). Its activity is regulated as follows. Activin receptor type-2 (ACVR2A or ACVR2B) activates the type-1 receptor through phosphorylation of its regulatory GS domain. Its function is as follows. Transmembrane serine/threonine kinase activin type-1 receptor forming an activin receptor complex with activin receptor type-2 (ACVR2A or ACVR2B). Transduces the activin signal from the cell surface to the cytoplasm and is thus regulating a many physiological and pathological processes including neuronal differentiation and neuronal survival, hair follicle development and cycling, FSH production by the pituitary gland, wound healing, extracellular matrix production, immunosuppression and carcinogenesis. Activin is also thought to have a paracrine or autocrine role in follicular development in the ovary. Within the receptor complex, type-2 receptors (ACVR2A and/or ACVR2B) act as a primary activin receptors whereas the type-1 receptors like ACVR1B act as downstream transducers of activin signals. Activin binds to type-2 receptor at the plasma membrane and activates its serine-threonine kinase. The activated receptor type-2 then phosphorylates and activates the type-1 receptor such as ACVR1B. Once activated, the type-1 receptor binds and phosphorylates the SMAD proteins SMAD2 and SMAD3, on serine residues of the C-terminal tail. Soon after their association with the activin receptor and subsequent phosphorylation, SMAD2 and SMAD3 are released into the cytoplasm where they interact with the common partner SMAD4. This SMAD complex translocates into the nucleus where it mediates activin-induced transcription. Inhibitory SMAD7, which is recruited to ACVR1B through FKBP1A, can prevent the association of SMAD2 and SMAD3 with the activin receptor complex, thereby blocking the activin signal. Activin signal transduction is also antagonized by the binding to the receptor of inhibin-B via the IGSF1 inhibin coreceptor. ACVR1B also phosphorylates TDP2. The sequence is that of Activin receptor type-1B (Acvr1b) from Rattus norvegicus (Rat).